The sequence spans 267 residues: Orotidine 5'-phosphate decarboxylase (267 aa).

The Proton donor role is filled by Lys93.

Belongs to the OMP decarboxylase family. Type 2 subfamily.

The enzyme catalyses orotidine 5'-phosphate + H(+) = UMP + CO2. The protein operates within pyrimidine metabolism; UMP biosynthesis via de novo pathway; UMP from orotate: step 2/2. This chain is Orotidine 5'-phosphate decarboxylase, found in Herpetosiphon aurantiacus (strain ATCC 23779 / DSM 785 / 114-95).